Consider the following 142-residue polypeptide: Hemoglobin subunit alpha-1 (142 aa).

Positions 2-142 (VLSADDKSNV…VSTVLTSKYR (141 aa)) constitute a Globin domain. His-59 contributes to the O2 binding site. His-88 is a binding site for heme b.

Belongs to the globin family. Heterotetramer of two alpha chains and two beta chains. Red blood cells.

Functionally, involved in oxygen transport from the lung to the various peripheral tissues. Hemopressin acts as an antagonist peptide of the cannabinoid receptor CNR1. Hemopressin-binding efficiently blocks cannabinoid receptor CNR1 and subsequent signaling. The protein is Hemoglobin subunit alpha-1 (HBA1) of Equus quagga burchellii (Burchell's zebra).